A 367-amino-acid chain; its full sequence is Putative transport protein MT0215 (367 aa).

Helical transmembrane passes span 18-38, 41-61, 74-94, 161-181, 228-248, 249-269, 270-290, 314-334, and 337-357; these read AAWA…LWVL, FEVI…LVPP, VAVT…LTFV, ITEL…FLYG, AGVG…LASL, VFFG…LAVV, VALL…LIAV, VVLA…LLAV, and VAFF…ADVA.

Belongs to the autoinducer-2 exporter (AI-2E) (TC 2.A.86) family.

It is found in the cell membrane. This chain is Putative transport protein MT0215, found in Mycobacterium tuberculosis (strain CDC 1551 / Oshkosh).